Here is a 337-residue protein sequence, read N- to C-terminus: Pyridoxal 5'-phosphate synthase subunit PdxS (337 aa).

A D-ribose 5-phosphate-binding site is contributed by aspartate 65. Lysine 122 functions as the Schiff-base intermediate with D-ribose 5-phosphate in the catalytic mechanism. Glycine 194 is a binding site for D-ribose 5-phosphate. Residue lysine 206 coordinates D-glyceraldehyde 3-phosphate. Residues glycine 255 and 276–277 each bind D-ribose 5-phosphate; that span reads GS.

This sequence belongs to the PdxS/SNZ family. As to quaternary structure, in the presence of PdxT, forms a dodecamer of heterodimers.

The enzyme catalyses aldehydo-D-ribose 5-phosphate + D-glyceraldehyde 3-phosphate + L-glutamine = pyridoxal 5'-phosphate + L-glutamate + phosphate + 3 H2O + H(+). The protein operates within cofactor biosynthesis; pyridoxal 5'-phosphate biosynthesis. Functionally, catalyzes the formation of pyridoxal 5'-phosphate from ribose 5-phosphate (RBP), glyceraldehyde 3-phosphate (G3P) and ammonia. The ammonia is provided by the PdxT subunit. Can also use ribulose 5-phosphate and dihydroxyacetone phosphate as substrates, resulting from enzyme-catalyzed isomerization of RBP and G3P, respectively. This is Pyridoxal 5'-phosphate synthase subunit PdxS from Pyrobaculum arsenaticum (strain DSM 13514 / JCM 11321 / PZ6).